Here is a 107-residue protein sequence, read N- to C-terminus: Transcription initiation factor IIA subunit 2-2 (107 aa).

It belongs to the TFIIA subunit 2 family. TFIIA is a heterodimer of the large unprocessed subunit 1 and a small subunit gamma. It was originally believed to be a heterotrimer of an alpha (p30), a beta (p20) and a gamma (p14) subunit.

The protein localises to the nucleus. Functionally, TFIIA is a component of the transcription machinery of RNA polymerase II and plays an important role in transcriptional activation. TFIIA in a complex with TBP mediates transcriptional activity. In Drosophila melanogaster (Fruit fly), this protein is Transcription initiation factor IIA subunit 2-2 (TfIIA-S-2).